A 196-amino-acid polypeptide reads, in one-letter code: HTH-type transcriptional regulator EcpR (196 aa).

Positions 138–196 constitute an HTH luxR-type domain; the sequence is KDIKKDKITDREMEIIRMTAQGMQPKSIARIENCSVKTVYTHRRNAEAKLYSKIYKLVQ. Positions 162 to 181 form a DNA-binding region, H-T-H motif; the sequence is PKSIARIENCSVKTVYTHRR.

Belongs to the EcpR/MatA family.

The protein resides in the cytoplasm. Functionally, part of the ecpRABCDE operon, which encodes the E.coli common pilus (ECP). ECP is found in both commensal and pathogenic strains and plays a dual role in early-stage biofilm development and host cell recognition. Positively regulates the expression of the ecp operon. The polypeptide is HTH-type transcriptional regulator EcpR (ecpR) (Escherichia coli (strain K12 / DH10B)).